Here is a 196-residue protein sequence, read N- to C-terminus: Guanylate kinase (196 aa).

Residues 7–191 (RNIVLLVGPS…AAEEIEKIIL (185 aa)) enclose the Guanylate kinase-like domain. Residue 14-21 (GPSGVGKG) coordinates ATP.

This sequence belongs to the guanylate kinase family.

Its subcellular location is the cytoplasm. The enzyme catalyses GMP + ATP = GDP + ADP. Essential for recycling GMP and indirectly, cGMP. The sequence is that of Guanylate kinase from Mycoplasmopsis pulmonis (strain UAB CTIP) (Mycoplasma pulmonis).